Reading from the N-terminus, the 246-residue chain is DNA polymerase sliding clamp (246 aa).

This sequence belongs to the PCNA family. As to quaternary structure, homotrimer. The subunits circularize to form a toroid; DNA passes through its center. Replication factor C (RFC) is required to load the toroid on the DNA.

Its function is as follows. Sliding clamp subunit that acts as a moving platform for DNA processing. Responsible for tethering the catalytic subunit of DNA polymerase and other proteins to DNA during high-speed replication. This is DNA polymerase sliding clamp from Thermoplasma volcanium (strain ATCC 51530 / DSM 4299 / JCM 9571 / NBRC 15438 / GSS1).